The primary structure comprises 210 residues: Flagellar transcriptional regulator FlhC (210 aa).

4 residues coordinate Zn(2+): Cys-144, Cys-147, Cys-164, and Cys-167.

This sequence belongs to the FlhC family. Heterohexamer composed of two FlhC and four FlhD subunits. Each FlhC binds a FlhD dimer, forming a heterotrimer, and a hexamer assembles by dimerization of two heterotrimers. Requires Zn(2+) as cofactor.

It is found in the cytoplasm. In terms of biological role, functions in complex with FlhD as a master transcriptional regulator that regulates transcription of several flagellar and non-flagellar operons by binding to their promoter region. Activates expression of class 2 flagellar genes, including fliA, which is a flagellum-specific sigma factor that turns on the class 3 genes. Also regulates genes whose products function in a variety of physiological pathways. The sequence is that of Flagellar transcriptional regulator FlhC from Cupriavidus pinatubonensis (strain JMP 134 / LMG 1197) (Cupriavidus necator (strain JMP 134)).